Consider the following 227-residue polypeptide: uncharacterized protein (227 aa).

A coiled-coil region spans residues 52–100 (NKRAKLYRERNKAKLKEKQHKWYHKGGGKEHKKLYDKINLEKSNMRDKN).

The protein belongs to the mimivirus L246/L426 family.

This is an uncharacterized protein from Acanthamoeba polyphaga mimivirus (APMV).